A 485-amino-acid chain; its full sequence is Benzaldehyde dehydrogenase YfmT (485 aa).

Residue 231-236 (GSTKVG) coordinates NAD(+). Active-site residues include glutamate 253 and cysteine 287.

Belongs to the aldehyde dehydrogenase family.

It catalyses the reaction benzaldehyde + NAD(+) + H2O = benzoate + NADH + 2 H(+). The enzyme catalyses vanillin + NAD(+) + H2O = vanillate + NADH + 2 H(+). In terms of biological role, a benzaldehyde dehydrogenase able to act on substrates with 3- and 4-hydroxy and methoxy substitutions; converts vanillin (4-hydroxy-3-methoxybenzaldehyde) to vanillic acid in vitro. The physiological substrate is unknown. The chain is Benzaldehyde dehydrogenase YfmT (yfmT) from Bacillus subtilis (strain 168).